The sequence spans 88 residues: Large ribosomal subunit protein eL31 (88 aa).

It belongs to the eukaryotic ribosomal protein eL31 family.

The sequence is that of Large ribosomal subunit protein eL31 (rpl31e) from Sulfurisphaera tokodaii (strain DSM 16993 / JCM 10545 / NBRC 100140 / 7) (Sulfolobus tokodaii).